The following is a 146-amino-acid chain: Hemoglobin subunit beta (146 aa).

V1 carries the post-translational modification N-acetylvaline. The region spanning 2 to 146 (HLTGEEKSAV…VANALAHKYH (145 aa)) is the Globin domain. T12 carries the phosphothreonine modification. Phosphoserine is present on S44. Position 59 is an N6-acetyllysine (K59). H63 is a heme b binding site. Position 82 is an N6-acetyllysine (K82). H92 lines the heme b pocket. C93 carries the post-translational modification S-nitrosocysteine. K144 carries the post-translational modification N6-acetyllysine.

Belongs to the globin family. In terms of assembly, heterotetramer of two alpha chains and two beta chains. As to expression, red blood cells.

Involved in oxygen transport from the lung to the various peripheral tissues. This chain is Hemoglobin subunit beta (HBB), found in Saguinus oedipus (Cotton-top tamarin).